Reading from the N-terminus, the 355-residue chain is UDP-N-acetylglucosamine--N-acetylmuramyl-(pentapeptide) pyrophosphoryl-undecaprenol N-acetylglucosamine transferase (355 aa).

Residues 15 to 17 (TGG), Asn127, Arg163, Ser191, Ile244, 263 to 268 (ALTVSE), and Gln288 each bind UDP-N-acetyl-alpha-D-glucosamine.

The protein belongs to the glycosyltransferase 28 family. MurG subfamily.

The protein localises to the cell inner membrane. It carries out the reaction di-trans,octa-cis-undecaprenyl diphospho-N-acetyl-alpha-D-muramoyl-L-alanyl-D-glutamyl-meso-2,6-diaminopimeloyl-D-alanyl-D-alanine + UDP-N-acetyl-alpha-D-glucosamine = di-trans,octa-cis-undecaprenyl diphospho-[N-acetyl-alpha-D-glucosaminyl-(1-&gt;4)]-N-acetyl-alpha-D-muramoyl-L-alanyl-D-glutamyl-meso-2,6-diaminopimeloyl-D-alanyl-D-alanine + UDP + H(+). It participates in cell wall biogenesis; peptidoglycan biosynthesis. Functionally, cell wall formation. Catalyzes the transfer of a GlcNAc subunit on undecaprenyl-pyrophosphoryl-MurNAc-pentapeptide (lipid intermediate I) to form undecaprenyl-pyrophosphoryl-MurNAc-(pentapeptide)GlcNAc (lipid intermediate II). The polypeptide is UDP-N-acetylglucosamine--N-acetylmuramyl-(pentapeptide) pyrophosphoryl-undecaprenol N-acetylglucosamine transferase (Salmonella newport (strain SL254)).